The chain runs to 447 residues: Maltoporin (447 aa).

Residues 1 to 26 form the signal peptide; that stretch reads MELRMKKVSVIAAAVAATLAAGSAFA.

It belongs to the porin LamB (TC 1.B.3) family. Homotrimer formed of three 18-stranded antiparallel beta-barrels, containing three independent channels.

It is found in the cell outer membrane. It carries out the reaction beta-maltose(in) = beta-maltose(out). Involved in the transport of maltose and maltodextrins. This is Maltoporin from Vibrio campbellii (strain ATCC BAA-1116).